Reading from the N-terminus, the 266-residue chain is Phosphatidylglycerol--prolipoprotein diacylglyceryl transferase (266 aa).

7 helical membrane-spanning segments follow: residues 10–30, 56–76, 92–112, 120–140, 172–192, 200–220, and 234–254; these read VAIALGPLKIHWYGLMYLVGI, LVFWVAMGVILGGRLGYVFFY, WEGGMSFHGGLIGVMLATWWF, FFELMDFIAPLVPIGLGAGRI, PSQLYQFALEGVALFTILWFY, MAVSGMFAACYGVFRFIVEFV, and WLTMGQILCLPMILGGIGLIA. Arg-139 contributes to the a 1,2-diacyl-sn-glycero-3-phospho-(1'-sn-glycerol) binding site.

It belongs to the Lgt family.

It localises to the cell inner membrane. It carries out the reaction L-cysteinyl-[prolipoprotein] + a 1,2-diacyl-sn-glycero-3-phospho-(1'-sn-glycerol) = an S-1,2-diacyl-sn-glyceryl-L-cysteinyl-[prolipoprotein] + sn-glycerol 1-phosphate + H(+). It functions in the pathway protein modification; lipoprotein biosynthesis (diacylglyceryl transfer). Functionally, catalyzes the transfer of the diacylglyceryl group from phosphatidylglycerol to the sulfhydryl group of the N-terminal cysteine of a prolipoprotein, the first step in the formation of mature lipoproteins. The polypeptide is Phosphatidylglycerol--prolipoprotein diacylglyceryl transferase (Ectopseudomonas mendocina (strain ymp) (Pseudomonas mendocina)).